Consider the following 103-residue polypeptide: Translation initiation factor 1A (103 aa).

The S1-like domain maps to 11–86 (TRVRTPRENE…EKCDVIWRYT (76 aa)).

The protein belongs to the eIF-1A family.

Seems to be required for maximal rate of protein biosynthesis. Enhances ribosome dissociation into subunits and stabilizes the binding of the initiator Met-tRNA(I) to 40 S ribosomal subunits. The chain is Translation initiation factor 1A (eIF1A) from Methanococcus maripaludis (strain C5 / ATCC BAA-1333).